The chain runs to 346 residues: mRNA endoribonuclease LsoA (346 aa).

In terms of assembly, can form a complex with cognate antitoxin LsoB and with enterobacteria phage T4 antitoxin Dmd.

Functionally, toxic component of a type II toxin-antitoxin (TA) system. A stable (half-life over 20 minutes) endoribonuclease that degrades mRNA. Degradation may be translation-stimulated. Overexpression in the absence of cognate antitoxin LsoB causes retarded growth and mRNA degradation, this effect is mitigated upon coexpression with antitoxin LsoB or enterobacteria phage T4 Dmd. Degrades late enterobacteria phage T4 mRNAs, protecting the host against T4 reproduction. This Escherichia coli O157:H7 protein is mRNA endoribonuclease LsoA (lsoA).